Consider the following 576-residue polypeptide: Proline--tRNA ligase (576 aa).

It belongs to the class-II aminoacyl-tRNA synthetase family. ProS type 1 subfamily. Homodimer.

The protein localises to the cytoplasm. The enzyme catalyses tRNA(Pro) + L-proline + ATP = L-prolyl-tRNA(Pro) + AMP + diphosphate. Its function is as follows. Catalyzes the attachment of proline to tRNA(Pro) in a two-step reaction: proline is first activated by ATP to form Pro-AMP and then transferred to the acceptor end of tRNA(Pro). As ProRS can inadvertently accommodate and process non-cognate amino acids such as alanine and cysteine, to avoid such errors it has two additional distinct editing activities against alanine. One activity is designated as 'pretransfer' editing and involves the tRNA(Pro)-independent hydrolysis of activated Ala-AMP. The other activity is designated 'posttransfer' editing and involves deacylation of mischarged Ala-tRNA(Pro). The misacylated Cys-tRNA(Pro) is not edited by ProRS. The chain is Proline--tRNA ligase from Bordetella petrii (strain ATCC BAA-461 / DSM 12804 / CCUG 43448).